The chain runs to 393 residues: 1-deoxy-D-xylulose 5-phosphate reductoisomerase (393 aa).

Residues threonine 10, glycine 11, serine 12, isoleucine 13, arginine 37, and asparagine 124 each contribute to the NADPH site. Lysine 125 contributes to the 1-deoxy-D-xylulose 5-phosphate binding site. Glutamate 126 lines the NADPH pocket. Residue aspartate 150 participates in Mn(2+) binding. 4 residues coordinate 1-deoxy-D-xylulose 5-phosphate: serine 151, glutamate 152, serine 182, and histidine 205. Mn(2+) is bound at residue glutamate 152. Glycine 211 contributes to the NADPH binding site. 1-deoxy-D-xylulose 5-phosphate contacts are provided by serine 218, asparagine 223, lysine 224, and glutamate 227. Glutamate 227 serves as a coordination point for Mn(2+).

This sequence belongs to the DXR family. It depends on Mg(2+) as a cofactor. The cofactor is Mn(2+).

The enzyme catalyses 2-C-methyl-D-erythritol 4-phosphate + NADP(+) = 1-deoxy-D-xylulose 5-phosphate + NADPH + H(+). It participates in isoprenoid biosynthesis; isopentenyl diphosphate biosynthesis via DXP pathway; isopentenyl diphosphate from 1-deoxy-D-xylulose 5-phosphate: step 1/6. Its function is as follows. Catalyzes the NADPH-dependent rearrangement and reduction of 1-deoxy-D-xylulose-5-phosphate (DXP) to 2-C-methyl-D-erythritol 4-phosphate (MEP). The polypeptide is 1-deoxy-D-xylulose 5-phosphate reductoisomerase (Nitrosococcus oceani (strain ATCC 19707 / BCRC 17464 / JCM 30415 / NCIMB 11848 / C-107)).